Reading from the N-terminus, the 186-residue chain is Alpha/beta-gliadin clone PTO-A10 (186 aa).

Residues 1–20 (PQPQPQYSQPQQPISQQQQQ) form a disordered region.

This sequence belongs to the gliadin/glutenin family. Substrate of transglutaminase.

Functionally, gliadin is the major seed storage protein in wheat. This is Alpha/beta-gliadin clone PTO-A10 from Triticum aestivum (Wheat).